The chain runs to 1453 residues: Collagen alpha-1(I) chain (1453 aa).

Positions 1-22 (MFSFVDSRLLLLIAATVLLTRG) are cleaved as a signal peptide. Positions 23–151 (EGEEDIQTGS…PPGLGGNFAP (129 aa)) are cleaved as a propeptide — N-terminal propeptide. Residues 31-89 (GSCVQDGLTYNDKDVWKPEPCQICVCDSGNILCDEVICEDTSDCPNAEIPFGECCPICP) enclose the VWFC domain. Residues 98 to 1203 (PESAGVEGPK…PQEKAHDGGR (1106 aa)) form a disordered region. Residues 106 to 116 (PKGDTGPRGDR) show a composition bias toward basic and acidic residues. Over residues 131–143 (PGLPGPPGPPGPP) the composition is skewed to pro residues. Q152 is subject to Pyrrolidone carboxylic acid. K160 carries the post-translational modification Allysine. Residues 162-176 (AGVAVPGPMGPAGPR) show a composition bias toward low complexity. 11 positions are modified to 4-hydroxyproline: P179, P182, P185, P194, P197, P200, P215, P230, P236, P245, and P251. The span at 187–206 (PQGFQGPPGEPGEPGASGPM) shows a compositional bias: low complexity. Residue K254 is modified to 5-hydroxylysine; alternate. A glycan (O-linked (Gal...) hydroxylysine; partial) is linked at K254. Over residues 265–284 (AKGQPGPAGPKGEPGSPGEN) the composition is skewed to low complexity. 4-hydroxyproline occurs at positions 269, 278, 281, 287, 296, 302, 317, 323, 332, and 335. The span at 307–319 (PAGARGNDGAPGA) shows a compositional bias: low complexity. Residues 320–334 (AGPPGPTGPAGPPGF) show a composition bias toward pro residues. Positions 350–361 (RGSEGPQGSRGE) are enriched in low complexity. 4-hydroxyproline occurs at positions 362, 365, 377, 383, 392, 398, 401, and 416. Positions 368–418 (AGAAGPAGNPGADGQPGAKGATGAPGIAGAPGFPGARGPSGPQGPSGAPGP) are enriched in low complexity. The residue at position 419 (K419) is a 5-hydroxylysine. 4-hydroxyproline is present on residues P425, P428, P440, P449, P464, P470, P479, and P485. Residues 463-482 (EPGPAGLPGPAGERGAPGSR) show a composition bias toward low complexity. K494 bears the 5-hydroxylysine mark. Residues P497, P503, P512, P518, P524, P533, P536, P545, P554, P560, P572, P581, P584, P590, P593, P611, P629, P635, P641, P647, P653, P659, P671, P680, P692, P704, P707, P713, P719, P728, and P737 each carry the 4-hydroxyproline modification. Low complexity predominate over residues 527–581 (KGLTGSPGSPGPDGKTGPPGPAGQDGRPGPAGPPGARGQAGVMGFPGPKGAAGEP). The segment covering 623–664 (QGPAGAPGFQGLPGPAGPPGEAGKPGEQGVPGNAGAPGPAGA) has biased composition (low complexity). The segment covering 685 to 722 (PRGANGAPGNDGAKGDAGAPGAPGNEGPPGLEGMPGER) has biased composition (low complexity). 5-hydroxylysine is present on K740. 4-hydroxyproline is present on residues P746, P761, P767, P776, P788, P794, P797, P806, P812, P830, P839, and P848. Over residues 800–827 (AGFAGPPGADGQPGAKGETGDAGAKGDA) the composition is skewed to low complexity. Residues 835-883 (PTGAPGPAGZVGAPGPKGARGSAGPPGATGFPGAAGRVGPPGPSGNIGL) are compositionally biased toward low complexity. K851 carries the 5-hydroxylysine modification. Residues P860 and P866 each carry the 4-hydroxyproline modification. Position 874 is a 3-hydroxyproline (P874). 18 positions are modified to 4-hydroxyproline: P875, P884, P887, P908, P911, P917, P920, P926, P935, P953, P962, P965, P971, P986, P992, P998, P1007, and P1013. A compositionally biased stretch (low complexity) spans 890-908 (AGKZGSKGPRGETGPAGRP). Residues 910–920 (EPGPAGPPGPP) show a composition bias toward pro residues. The segment covering 985-995 (PPGPMGPPGLA) has biased composition (pro residues). The segment covering 997 to 1021 (PPGEAGREGAPGAEGAPGRDGAAGP) has biased composition (low complexity). The residue at position 1022 (K1022) is a 5-hydroxylysine; partial. A compositionally biased stretch (pro residues) spans 1031–1046 (AGPPGAPGAPGAPGPV). Residues P1034, P1037, P1040, and P1067 each carry the 4-hydroxyproline modification. Residues 1070–1081 (AGARGPAGPQGP) are compositionally biased toward low complexity. Residues 1082 to 1096 (RGDKGETGEQGDRGM) are compositionally biased toward basic and acidic residues. A 5-hydroxylysine; partial modification is found at K1085. K1097 bears the 5-hydroxylysine; alternate mark. An O-linked (Gal...) hydroxylysine; partial glycan is attached at K1097. A 4-hydroxyproline mark is found at P1109, P1112, P1115, P1133, and P1148. Residues 1115 to 1139 (PGEQGPSGASGPAGPRGPPGSAGAA) are compositionally biased toward low complexity. P1153 bears the 3-hydroxyproline mark. P1154 is modified (4-hydroxyproline). Positions 1166-1181 (VGPPGPPGPPGPPGPP) are enriched in pro residues. P1168 bears the 3-hydroxyproline mark. The residue at position 1169 (P1169) is a 4-hydroxyproline. P1171 is modified (3-hydroxyproline). The residue at position 1172 (P1172) is a 4-hydroxyproline. A 3-hydroxyproline modification is found at P1174. Residues P1175, P1178, and P1181 each carry the 4-hydroxyproline modification. Position 1197 is an allysine (K1197). Residues 1208-1453 (DDANVMRDRD…GIDIGPVCFL (246 aa)) constitute a propeptide, C-terminal propeptide. Residues 1218 to 1453 (LEVDTTLKSL…GIDIGPVCFL (236 aa)) enclose the Fibrillar collagen NC1 domain. 3 disulfides stabilise this stretch: C1248/C1280, C1288/C1451, and C1359/C1404. Residues D1266, N1268, Q1269, C1271, and D1274 each contribute to the Ca(2+) site. A glycan (N-linked (GlcNAc...) asparagine) is linked at N1354.

Belongs to the fibrillar collagen family. As to quaternary structure, trimers of one alpha 2(I) and two alpha 1(I) chains. In terms of processing, contains mostly 4-hydroxyproline. Proline residues at the third position of the tripeptide repeating unit (G-X-Y) are 4-hydroxylated in some or all of the chains. Contains 3-hydroxyproline. This modification occurs on the first proline residue in the sequence motif Gly-Pro-Hyp, where Hyp is 4-hydroxyproline. Post-translationally, lysine residues at the third position of the tripeptide repeating unit (G-X-Y) are 5-hydroxylated in some or all of the chains. In terms of processing, O-glycosylated on hydroxylated lysine residues. The O-linked glycan consists of a Glc-Gal disaccharide. In terms of tissue distribution, forms the fibrils of tendon, ligaments and bones. In bones the fibrils are mineralized with calcium hydroxyapatite.

It localises to the secreted. The protein localises to the extracellular space. Its subcellular location is the extracellular matrix. In terms of biological role, type I collagen is a member of group I collagen (fibrillar forming collagen). The polypeptide is Collagen alpha-1(I) chain (COL1A1) (Gallus gallus (Chicken)).